We begin with the raw amino-acid sequence, 330 residues long: Methionyl-tRNA formyltransferase (330 aa).

112–115 contacts (6S)-5,6,7,8-tetrahydrofolate; sequence SLLP.

It belongs to the Fmt family.

The catalysed reaction is L-methionyl-tRNA(fMet) + (6R)-10-formyltetrahydrofolate = N-formyl-L-methionyl-tRNA(fMet) + (6S)-5,6,7,8-tetrahydrofolate + H(+). Its function is as follows. Attaches a formyl group to the free amino group of methionyl-tRNA(fMet). The formyl group appears to play a dual role in the initiator identity of N-formylmethionyl-tRNA by promoting its recognition by IF2 and preventing the misappropriation of this tRNA by the elongation apparatus. This Synechococcus sp. (strain RCC307) protein is Methionyl-tRNA formyltransferase.